The sequence spans 389 residues: GTPase Obg (389 aa).

Residues 1 to 159 (MKFVDEAVIR…RSLKLELLLL (159 aa)) form the Obg domain. An OBG-type G domain is found at 160 to 333 (ADVGLLGMPN…LALKLLDYIA (174 aa)). Residues 166–173 (GMPNAGKS), 191–195 (FTTLV), 213–216 (DIPG), 283–286 (NKTD), and 314–316 (SAY) contribute to the GTP site. Mg(2+) contacts are provided by Ser-173 and Thr-193.

It belongs to the TRAFAC class OBG-HflX-like GTPase superfamily. OBG GTPase family. As to quaternary structure, monomer. Mg(2+) serves as cofactor.

Its subcellular location is the cytoplasm. Functionally, an essential GTPase which binds GTP, GDP and possibly (p)ppGpp with moderate affinity, with high nucleotide exchange rates and a fairly low GTP hydrolysis rate. Plays a role in control of the cell cycle, stress response, ribosome biogenesis and in those bacteria that undergo differentiation, in morphogenesis control. This is GTPase Obg from Shewanella baltica (strain OS223).